Reading from the N-terminus, the 219-residue chain is Probable nicotinate-nucleotide adenylyltransferase (219 aa).

It belongs to the NadD family.

It catalyses the reaction nicotinate beta-D-ribonucleotide + ATP + H(+) = deamido-NAD(+) + diphosphate. It functions in the pathway cofactor biosynthesis; NAD(+) biosynthesis; deamido-NAD(+) from nicotinate D-ribonucleotide: step 1/1. In terms of biological role, catalyzes the reversible adenylation of nicotinate mononucleotide (NaMN) to nicotinic acid adenine dinucleotide (NaAD). This is Probable nicotinate-nucleotide adenylyltransferase from Hahella chejuensis (strain KCTC 2396).